We begin with the raw amino-acid sequence, 306 residues long: Tryptophan 2,3-dioxygenase (306 aa).

The interval 1-33 is disordered; that stretch reads MQPPGDDAAPRCPFAGAHAPDAPHVPEAAGDDA. Substrate-binding positions include 75–79, Tyr-137, and Arg-141; that span reads FIIQH. His-264 lines the heme pocket. A substrate-binding site is contributed by Thr-278.

It belongs to the tryptophan 2,3-dioxygenase family. As to quaternary structure, homotetramer. Heme serves as cofactor.

The catalysed reaction is L-tryptophan + O2 = N-formyl-L-kynurenine. Its pathway is amino-acid degradation; L-tryptophan degradation via kynurenine pathway; L-kynurenine from L-tryptophan: step 1/2. Its function is as follows. Heme-dependent dioxygenase that catalyzes the oxidative cleavage of the L-tryptophan (L-Trp) pyrrole ring and converts L-tryptophan to N-formyl-L-kynurenine. Catalyzes the oxidative cleavage of the indole moiety. In Burkholderia pseudomallei (strain 1106a), this protein is Tryptophan 2,3-dioxygenase.